We begin with the raw amino-acid sequence, 419 residues long: Dynein regulatory complex protein 9 (419 aa).

Disordered regions lie at residues 25–45 (TGEP…EETS) and 394–419 (NFKM…RRKK). The span at 30-45 (EAAEEDLDYEEEEETS) shows a compositional bias: acidic residues. An IQ domain is found at 372-401 (ELRSIVKLQAWWRGSVVRKEIGNFKMPKKD). The segment covering 394 to 413 (NFKMPKKDKDDSKDSKGKEK) has biased composition (basic and acidic residues).

Belongs to the DRC9 family. As to quaternary structure, component of the nexin-dynein regulatory complex (N-DRC). Interacts (via IQ domain) with CALM when calcium levels are low. Does not interact with CALM in the presence of Ca(2+). Interacts with the HSP70 proteins HSPA1L and HSPA8. May form a complex with CAMK4 and HSP70. In terms of tissue distribution, expressed in the testes (at protein level). Also detected in oviduct (at protein level). Also detected in the trachea.

The protein localises to the cytoplasm. The protein resides in the cell projection. It is found in the cilium. It localises to the flagellum. Its subcellular location is the cytoskeleton. The protein localises to the flagellum axoneme. Functionally, component of the nexin-dynein regulatory complex (N-DRC), a key regulator of ciliary/flagellar motility which maintains the alignment and integrity of the distal axoneme and regulates microtubule sliding in motile axonemes. Binds calmodulin when cellular Ca(2+) levels are low and thereby contributes to the regulation of calcium and calmodulin-dependent protein kinase IV (CAMK4) activity; contributes to the regulation of CAMK4 signaling cascades. Required for normal axoneme assembly in sperm flagella, normal sperm tail formation and for male fertility. This chain is Dynein regulatory complex protein 9 (Iqcg), found in Mus musculus (Mouse).